We begin with the raw amino-acid sequence, 451 residues long: tRNA modification GTPase MnmE (451 aa).

Residues arginine 23, glutamate 80, and lysine 119 each contribute to the (6S)-5-formyl-5,6,7,8-tetrahydrofolate site. One can recognise a TrmE-type G domain in the interval 215–372; sequence GIKVVLAGQP…LRAALLKTAG (158 aa). Residue asparagine 225 coordinates K(+). Residues 225 to 230, 244 to 250, and 269 to 272 contribute to the GTP site; these read NVGKSS, TDIPGTT, and DTAG. Residue serine 229 participates in Mg(2+) binding. Positions 244, 246, and 249 each coordinate K(+). Residue threonine 250 coordinates Mg(2+). (6S)-5-formyl-5,6,7,8-tetrahydrofolate is bound at residue lysine 451.

Belongs to the TRAFAC class TrmE-Era-EngA-EngB-Septin-like GTPase superfamily. TrmE GTPase family. As to quaternary structure, homodimer. Heterotetramer of two MnmE and two MnmG subunits. It depends on K(+) as a cofactor.

Its subcellular location is the cytoplasm. Its function is as follows. Exhibits a very high intrinsic GTPase hydrolysis rate. Involved in the addition of a carboxymethylaminomethyl (cmnm) group at the wobble position (U34) of certain tRNAs, forming tRNA-cmnm(5)s(2)U34. This Nitrosomonas europaea (strain ATCC 19718 / CIP 103999 / KCTC 2705 / NBRC 14298) protein is tRNA modification GTPase MnmE.